The following is a 538-amino-acid chain: MFS-type transporter oryC (538 aa).

A run of 6 helical transmembrane segments spans residues 14–34 (LTGG…MSLF), 67–87 (TVTA…FTIG), 96–116 (ILLG…SFSL), 120–140 (FVGR…APIW), 162–182 (IFGF…GGSI), and 186–206 (FPLA…PWLP). An N-linked (GlcNAc...) asparagine glycan is attached at Asn268. Transmembrane regions (helical) follow at residues 288–308 (FGGI…SVGL), 315–335 (LLAA…VLLV), 342–362 (GLML…TILL), 379–399 (VAFF…VPWL), 416–436 (VATA…PIGI), and 443–463 (FWIV…FLYP). A glycan (N-linked (GlcNAc...) asparagine) is linked at Asn467.

This sequence belongs to the major facilitator superfamily. Sugar transporter (TC 2.A.1.1) family.

The protein resides in the membrane. In terms of biological role, MFS-type transporter; part of the gene cluster that mediates the biosynthesis of oryzines, natural products with an unusual maleidride backbone. The protein is MFS-type transporter oryC of Aspergillus oryzae (strain ATCC 42149 / RIB 40) (Yellow koji mold).